A 500-amino-acid polypeptide reads, in one-letter code: Glycerol kinase (500 aa).

Residue threonine 13 coordinates ADP. Residues threonine 13, threonine 14, and serine 15 each coordinate ATP. Threonine 13 is a sn-glycerol 3-phosphate binding site. Residue arginine 17 participates in ADP binding. Sn-glycerol 3-phosphate is bound by residues arginine 83, glutamate 84, tyrosine 135, and aspartate 244. Arginine 83, glutamate 84, tyrosine 135, aspartate 244, and glutamine 245 together coordinate glycerol. Residues threonine 266 and glycine 309 each coordinate ADP. Positions 266, 309, 313, and 410 each coordinate ATP. Residues glycine 410 and asparagine 414 each coordinate ADP.

Belongs to the FGGY kinase family.

It carries out the reaction glycerol + ATP = sn-glycerol 3-phosphate + ADP + H(+). It functions in the pathway polyol metabolism; glycerol degradation via glycerol kinase pathway; sn-glycerol 3-phosphate from glycerol: step 1/1. With respect to regulation, inhibited by fructose 1,6-bisphosphate (FBP). Key enzyme in the regulation of glycerol uptake and metabolism. Catalyzes the phosphorylation of glycerol to yield sn-glycerol 3-phosphate. The protein is Glycerol kinase of Burkholderia ambifaria (strain MC40-6).